Consider the following 141-residue polypeptide: ATP synthase epsilon chain (141 aa).

This sequence belongs to the ATPase epsilon chain family. In terms of assembly, F-type ATPases have 2 components, CF(1) - the catalytic core - and CF(0) - the membrane proton channel. CF(1) has five subunits: alpha(3), beta(3), gamma(1), delta(1), epsilon(1). CF(0) has three main subunits: a, b and c.

Its subcellular location is the cell membrane. Functionally, produces ATP from ADP in the presence of a proton gradient across the membrane. The chain is ATP synthase epsilon chain from Mycoplasma mobile (strain ATCC 43663 / 163K / NCTC 11711) (Mesomycoplasma mobile).